The following is a 206-amino-acid chain: MSSGAEKIVSSIMSEAQAKADAIIREAEDEAAGIVDEGEKRARMASERILESARKQADMRYQQIISEAKMNARRAELEAREEVIQEAFKKAEEELKNLASTSQEEYVSALRGMIKEAAVEIGGGDLVVSMREDDRSLDLGLDKIAAEVEAETGKKTTLKVGDSIRTIGGAVVRTEDGLIEVNNTIEARMSRFRKALRSEVARVLFE.

This sequence belongs to the V-ATPase E subunit family. Has multiple subunits with at least A(3), B(3), C, D, E, F, H, I and proteolipid K(x).

The protein localises to the cell membrane. Its function is as follows. Component of the A-type ATP synthase that produces ATP from ADP in the presence of a proton gradient across the membrane. In Methanothermobacter thermautotrophicus (strain ATCC 29096 / DSM 1053 / JCM 10044 / NBRC 100330 / Delta H) (Methanobacterium thermoautotrophicum), this protein is A-type ATP synthase subunit E.